Reading from the N-terminus, the 496-residue chain is ATP synthase subunit beta, chloroplastic (496 aa).

An ATP-binding site is contributed by 170–177; the sequence is GGAGVGKT.

Belongs to the ATPase alpha/beta chains family. As to quaternary structure, F-type ATPases have 2 components, CF(1) - the catalytic core - and CF(0) - the membrane proton channel. CF(1) has five subunits: alpha(3), beta(3), gamma(1), delta(1), epsilon(1). CF(0) has four main subunits: a(1), b(1), b'(1) and c(9-12).

The protein localises to the plastid. Its subcellular location is the chloroplast thylakoid membrane. It carries out the reaction ATP + H2O + 4 H(+)(in) = ADP + phosphate + 5 H(+)(out). Functionally, produces ATP from ADP in the presence of a proton gradient across the membrane. The catalytic sites are hosted primarily by the beta subunits. The chain is ATP synthase subunit beta, chloroplastic from Trachycarpus fortunei (Chinese windmill palm).